The sequence spans 179 residues: Transcription termination/antitermination protein NusG (179 aa).

Residues 130–157 (EGDVVQIIDGAFMGQEGRVVEIENNKVK) form the KOW domain.

The protein belongs to the NusG family.

Participates in transcription elongation, termination and antitermination. The polypeptide is Transcription termination/antitermination protein NusG (Streptococcus pyogenes serotype M1).